Consider the following 258-residue polypeptide: Imidazole glycerol phosphate synthase subunit HisF (258 aa).

Residues D11 and D130 contribute to the active site.

This sequence belongs to the HisA/HisF family. As to quaternary structure, heterodimer of HisH and HisF.

The protein resides in the cytoplasm. It catalyses the reaction 5-[(5-phospho-1-deoxy-D-ribulos-1-ylimino)methylamino]-1-(5-phospho-beta-D-ribosyl)imidazole-4-carboxamide + L-glutamine = D-erythro-1-(imidazol-4-yl)glycerol 3-phosphate + 5-amino-1-(5-phospho-beta-D-ribosyl)imidazole-4-carboxamide + L-glutamate + H(+). It functions in the pathway amino-acid biosynthesis; L-histidine biosynthesis; L-histidine from 5-phospho-alpha-D-ribose 1-diphosphate: step 5/9. Functionally, IGPS catalyzes the conversion of PRFAR and glutamine to IGP, AICAR and glutamate. The HisF subunit catalyzes the cyclization activity that produces IGP and AICAR from PRFAR using the ammonia provided by the HisH subunit. This Klebsiella pneumoniae (strain 342) protein is Imidazole glycerol phosphate synthase subunit HisF.